The chain runs to 367 residues: MSLRRLSVTAVRNLHPVTLSPSPRINILYGANGSGKTSVLEAVHLLGLARSFRSTRLNPVIQYEQQTCTVFGQVELAEGGTSNLGVSRERQGEFTIRIDGQNARSAAQLAEMLPLQLINPDSFRLLEGAPKVRRQFLDWGVFHVEPRFMATWQRLQKALRQRNSWLRHGTLDAVSQAAWDRELCLASAEIDEYRRNYIKALKPVFERTLSELVELDGLTLSYYRGWDKDRELNEVLATSLLRDQQMGHTQAGPQRADLRLRLGANNAADILSRGQQKLVVCALRIAQGHLVSQVRRGQCIYLVDDLPSELDEQHRRALCRLLEELNCQVFITCVDHEFLREGWQTETPVALFHVEQGRITQTHDHRE.

30–37 (GANGSGKT) serves as a coordination point for ATP.

The protein belongs to the RecF family.

It is found in the cytoplasm. Its function is as follows. The RecF protein is involved in DNA metabolism; it is required for DNA replication and normal SOS inducibility. RecF binds preferentially to single-stranded, linear DNA. It also seems to bind ATP. This is DNA replication and repair protein RecF from Pseudomonas entomophila (strain L48).